The chain runs to 254 residues: Phosphoribosylaminoimidazole-succinocarboxamide synthase (254 aa).

It belongs to the SAICAR synthetase family.

It catalyses the reaction 5-amino-1-(5-phospho-D-ribosyl)imidazole-4-carboxylate + L-aspartate + ATP = (2S)-2-[5-amino-1-(5-phospho-beta-D-ribosyl)imidazole-4-carboxamido]succinate + ADP + phosphate + 2 H(+). It participates in purine metabolism; IMP biosynthesis via de novo pathway; 5-amino-1-(5-phospho-D-ribosyl)imidazole-4-carboxamide from 5-amino-1-(5-phospho-D-ribosyl)imidazole-4-carboxylate: step 1/2. The polypeptide is Phosphoribosylaminoimidazole-succinocarboxamide synthase (Brucella abortus (strain S19)).